The primary structure comprises 145 residues: D-aminoacyl-tRNA deacylase (145 aa).

The Gly-cisPro motif, important for rejection of L-amino acids motif lies at 137–138 (GP).

The protein belongs to the DTD family. In terms of assembly, homodimer.

It is found in the cytoplasm. It catalyses the reaction glycyl-tRNA(Ala) + H2O = tRNA(Ala) + glycine + H(+). The catalysed reaction is a D-aminoacyl-tRNA + H2O = a tRNA + a D-alpha-amino acid + H(+). In terms of biological role, an aminoacyl-tRNA editing enzyme that deacylates mischarged D-aminoacyl-tRNAs. Also deacylates mischarged glycyl-tRNA(Ala), protecting cells against glycine mischarging by AlaRS. Acts via tRNA-based rather than protein-based catalysis; rejects L-amino acids rather than detecting D-amino acids in the active site. By recycling D-aminoacyl-tRNA to D-amino acids and free tRNA molecules, this enzyme counteracts the toxicity associated with the formation of D-aminoacyl-tRNA entities in vivo and helps enforce protein L-homochirality. The sequence is that of D-aminoacyl-tRNA deacylase from Salmonella agona (strain SL483).